Reading from the N-terminus, the 385-residue chain is 1-deoxy-D-xylulose 5-phosphate reductoisomerase 1 (385 aa).

The NADPH site is built by T11, G12, S13, I14, N39, and N122. Position 123 (K123) interacts with 1-deoxy-D-xylulose 5-phosphate. E124 is a binding site for NADPH. D148 is a Mn(2+) binding site. 1-deoxy-D-xylulose 5-phosphate contacts are provided by S149, E150, S174, and H197. E150 contributes to the Mn(2+) binding site. NADPH is bound at residue G203. The 1-deoxy-D-xylulose 5-phosphate site is built by S210, N215, K216, and E219. E219 contacts Mn(2+).

Belongs to the DXR family. The cofactor is Mg(2+). It depends on Mn(2+) as a cofactor.

The catalysed reaction is 2-C-methyl-D-erythritol 4-phosphate + NADP(+) = 1-deoxy-D-xylulose 5-phosphate + NADPH + H(+). Its pathway is isoprenoid biosynthesis; isopentenyl diphosphate biosynthesis via DXP pathway; isopentenyl diphosphate from 1-deoxy-D-xylulose 5-phosphate: step 1/6. Catalyzes the NADPH-dependent rearrangement and reduction of 1-deoxy-D-xylulose-5-phosphate (DXP) to 2-C-methyl-D-erythritol 4-phosphate (MEP). This chain is 1-deoxy-D-xylulose 5-phosphate reductoisomerase 1, found in Bacillus anthracis.